The chain runs to 188 residues: Acireductone dioxygenase (188 aa).

Residues histidine 97, histidine 99, glutamate 103, and histidine 141 each coordinate Fe(2+). Positions 97, 99, 103, and 141 each coordinate Ni(2+).

It belongs to the acireductone dioxygenase (ARD) family. Monomer. Fe(2+) serves as cofactor. The cofactor is Ni(2+).

The enzyme catalyses 1,2-dihydroxy-5-(methylsulfanyl)pent-1-en-3-one + O2 = 3-(methylsulfanyl)propanoate + CO + formate + 2 H(+). The catalysed reaction is 1,2-dihydroxy-5-(methylsulfanyl)pent-1-en-3-one + O2 = 4-methylsulfanyl-2-oxobutanoate + formate + 2 H(+). The protein operates within amino-acid biosynthesis; L-methionine biosynthesis via salvage pathway; L-methionine from S-methyl-5-thio-alpha-D-ribose 1-phosphate: step 5/6. Its function is as follows. Catalyzes 2 different reactions between oxygen and the acireductone 1,2-dihydroxy-3-keto-5-methylthiopentene (DHK-MTPene) depending upon the metal bound in the active site. Fe-containing acireductone dioxygenase (Fe-ARD) produces formate and 2-keto-4-methylthiobutyrate (KMTB), the alpha-ketoacid precursor of methionine in the methionine recycle pathway. Ni-containing acireductone dioxygenase (Ni-ARD) produces methylthiopropionate, carbon monoxide and formate, and does not lie on the methionine recycle pathway. This chain is Acireductone dioxygenase, found in Xylella fastidiosa (strain M23).